The primary structure comprises 109 residues: MATIATYLLAAVAEIGGCFAFWAWLRLDRSPLWLIPGMASLALFAWALTRIDSDLAGRAYAAYGGIYILTSLVWMWLVEGSRPDRWDTLGTVLCVSGALVIIFGPRGGQ.

4 helical membrane passes run 4 to 24 (IATYLLAAVAEIGGCFAFWAW), 31 to 51 (PLWLIPGMASLALFAWALTRI), 59 to 79 (AYAAYGGIYILTSLVWMWLVE), and 88 to 108 (TLGTVLCVSGALVIIFGPRGG).

It belongs to the UPF0060 family.

The protein localises to the cell inner membrane. In Rhodospirillum centenum (strain ATCC 51521 / SW), this protein is UPF0060 membrane protein RC1_3291.